The chain runs to 242 residues: UDP-2,3-diacylglucosamine hydrolase (242 aa).

Mn(2+) contacts are provided by Asp-8, His-10, Asp-41, Asn-79, and His-114. 79 to 80 is a substrate binding site; sequence NR. Residues Asp-122, Lys-164, Lys-167, and His-195 each coordinate substrate. Residues His-195 and His-197 each coordinate Mn(2+).

The protein belongs to the LpxH family. Mn(2+) serves as cofactor.

It localises to the cell inner membrane. It catalyses the reaction UDP-2-N,3-O-bis[(3R)-3-hydroxytetradecanoyl]-alpha-D-glucosamine + H2O = 2-N,3-O-bis[(3R)-3-hydroxytetradecanoyl]-alpha-D-glucosaminyl 1-phosphate + UMP + 2 H(+). Its pathway is glycolipid biosynthesis; lipid IV(A) biosynthesis; lipid IV(A) from (3R)-3-hydroxytetradecanoyl-[acyl-carrier-protein] and UDP-N-acetyl-alpha-D-glucosamine: step 4/6. Functionally, hydrolyzes the pyrophosphate bond of UDP-2,3-diacylglucosamine to yield 2,3-diacylglucosamine 1-phosphate (lipid X) and UMP by catalyzing the attack of water at the alpha-P atom. Involved in the biosynthesis of lipid A, a phosphorylated glycolipid that anchors the lipopolysaccharide to the outer membrane of the cell. In Vibrio parahaemolyticus serotype O3:K6 (strain RIMD 2210633), this protein is UDP-2,3-diacylglucosamine hydrolase.